The primary structure comprises 596 residues: Nuclear receptor subfamily 2 group C member 2 (596 aa).

Ser19 carries the phosphoserine; by MAPK modification. The residue at position 46 (Ser46) is a Phosphoserine. Ser55 and Ser68 each carry phosphoserine; by MAPK. Residue Ser98 is modified to Phosphoserine. Residues 114-189 constitute a DNA-binding region (nuclear receptor); the sequence is VEYCVVCGDK…MGMKMESVQS (76 aa). NR C4-type zinc fingers lie at residues 117-137 and 153-177; these read CVVC…CEGC and CRSS…LKKC. A Glycyl lysine isopeptide (Lys-Gly) (interchain with G-Cter in SUMO2) cross-link involves residue Lys192. At Ser219 the chain carries Phosphoserine. At Lys231 the chain carries N6-acetyllysine. Positions 341 to 583 constitute an NR LBD domain; it reads GSIHVISRDQ…SIIPYILKME (243 aa).

The protein belongs to the nuclear hormone receptor family. NR2 subfamily. Homodimer; can bind DNA as homodimer. Heterodimer; binds DNA as a heterodimer with NR2C1 required for chromatin remodeling and for binding to promoter regions such as globin DR1 repeats. Interacts with NR2C2AP; the interaction represses selective NR2C2-mediated transcriptional activity. Interacts with PCAF; the interaction preferentially occurs on the non-phosphorylated form and induces NR2C2-mediated transactivation activity and does not require the ligand-binding domain. Interacts (MAPK-mediated phosphorylated form) with NRIP1; the interaction promotes repression of NR2C2-mediated activity. Interacts with NLRP10. Interacts (via ligand-binding region) with transcriptional corepressor JAZF1; the interaction promotes NR2C2-mediated transcriptional repression. Phosphorylation on Ser-19 and Ser-68 is an important regulator of NR2C2-mediated transcriptional activity. Phosphorylation on these residues recruits the corepressor, NRIP1, leading to transcripional repression, whereas the non-phosphorylated form preferentially recruits the coactivator, PCAF. In terms of tissue distribution, expressed, during embryogenesis, in perichondrium, developing glomeruli structures and tubules of kidney, as well as in intestiinal villi. Also expressed in lung and hair follicles.

It localises to the nucleus. Functionally, orphan nuclear receptor that can act as a repressor or activator of transcription. An important repressor of nuclear receptor signaling pathways such as retinoic acid receptor, retinoid X, vitamin D3 receptor, thyroid hormone receptor and estrogen receptor pathways. May regulate gene expression during the late phase of spermatogenesis. Activates transcriptional activity of LHCG and is antagonist of PPARA-mediated transactivation. Together with NR2C1, forms the core of the DRED (direct repeat erythroid-definitive) complex that represses embryonic and fetal globin transcription including that of GATA1. Binds to hormone response elements (HREs) consisting of two 5'-AGGTCA-3' half site direct repeat consensus sequences. Plays a fundamental role in early embryonic development and embryonic stem cells. Required for normal spermatogenesis and cerebellum development. Appears to be important for neurodevelopmentally regulated behavior. The chain is Nuclear receptor subfamily 2 group C member 2 (Nr2c2) from Mus musculus (Mouse).